The primary structure comprises 627 residues: Spindle assembly abnormal protein 6 homolog (627 aa).

Positions 39 to 91 (VHRKDLVVRLTDDTDLYFLYNLIISEEDFQSLKVQQGLLIDFTSFPQKFIDLL) constitute a PISA domain. Positions 153–473 (LASCLSSVKE…SREVLKTNEN (321 aa)) form a coiled coil. Disordered stretches follow at residues 187-257 (QTLS…LQTK) and 561-586 (EVSP…SKYF). The segment covering 191–201 (EKSRELDKLRS) has biased composition (basic and acidic residues). Residues 202–213 (EWTSQTTSLSSR) are compositionally biased toward polar residues. Over residues 214 to 226 (HMQDLTAEREKAL) the composition is skewed to basic and acidic residues. A compositionally biased stretch (low complexity) spans 229 to 238 (QSRLQQQNEQ).

In terms of assembly, nine homodimers form a cartwheel structure with an internal diameter of 23 nM and radial spokes connecting to the microtubule triplets.

It localises to the cytoplasm. The protein localises to the cytoskeleton. The protein resides in the microtubule organizing center. Its subcellular location is the centrosome. Functionally, central scaffolding component of the centrioles ensuring their 9-fold symmetry. Required for centrosome biogenesis and duplication: required both for mother-centriole-dependent centriole duplication and deuterosome-dependent centriole amplification in multiciliated cells. This Danio rerio (Zebrafish) protein is Spindle assembly abnormal protein 6 homolog (sass6).